A 291-amino-acid chain; its full sequence is MDYLIKAIAYDGKVRAYAARTTDMVNEAQRRHDTWPTASAAIGRTMTASLMLGAMLKGEDKLTVKIEGGGPIGAIVADANAKGEVRAYVSNPHVHFDLNEQGKLDVRRAVGTDGTLSVVKDLGLRDYFTGQVEIVSGELGDDFTYYLVSSEQVPSSVGVGVLVNPDNTILAAGGFIIQLLPGTDEETISTIEKQLSQIEPISKLIQKGLTPEEILEEVLGQKPDVLETMPVKFHCSCSKDRFETAILGLGKKEIQDMIEEDGKAEAVCHFCNEKYLFTKEELEELRDETTR.

Cystine bridges form between Cys-235–Cys-237 and Cys-268–Cys-271.

Belongs to the HSP33 family. Under oxidizing conditions two disulfide bonds are formed involving the reactive cysteines. Under reducing conditions zinc is bound to the reactive cysteines and the protein is inactive.

It localises to the cytoplasm. Its function is as follows. Redox regulated molecular chaperone. Protects both thermally unfolding and oxidatively damaged proteins from irreversible aggregation. Plays an important role in the bacterial defense system toward oxidative stress. The protein is 33 kDa chaperonin of Bacillus velezensis (strain DSM 23117 / BGSC 10A6 / LMG 26770 / FZB42) (Bacillus amyloliquefaciens subsp. plantarum).